We begin with the raw amino-acid sequence, 407 residues long: Probable 2,3-bisphosphoglycerate-independent phosphoglycerate mutase (407 aa).

A disordered region spans residues 175-200; sequence GSDAINDTDPQQVGKEPLEPKGENPN.

Belongs to the BPG-independent phosphoglycerate mutase family. A-PGAM subfamily.

It carries out the reaction (2R)-2-phosphoglycerate = (2R)-3-phosphoglycerate. Its pathway is carbohydrate degradation; glycolysis; pyruvate from D-glyceraldehyde 3-phosphate: step 3/5. Catalyzes the interconversion of 2-phosphoglycerate and 3-phosphoglycerate. The chain is Probable 2,3-bisphosphoglycerate-independent phosphoglycerate mutase from Aquifex aeolicus (strain VF5).